The sequence spans 87 residues: Large ribosomal subunit protein bL27 (87 aa).

The disordered stretch occupies residues Met1 to Leu21.

The protein belongs to the bacterial ribosomal protein bL27 family.

This chain is Large ribosomal subunit protein bL27, found in Aromatoleum aromaticum (strain DSM 19018 / LMG 30748 / EbN1) (Azoarcus sp. (strain EbN1)).